The primary structure comprises 122 residues: Urocortin (122 aa).

A signal peptide spans 1–25; the sequence is MRQRGRATLLVALLLLVQLRPESSQ. The propeptide occupies 26–80; that stretch reads WSPAAAAANVVQDPNLRWNPGVRNQGGGVRALLLLLAERFPRRAGSEPAGERQRR. A Valine amide modification is found at Val120.

Belongs to the sauvagine/corticotropin-releasing factor/urotensin I family. As to quaternary structure, interacts with CRHR1 and CRHR2 (via their N-terminal extracellular domain).

It is found in the secreted. In terms of biological role, acts in vitro to stimulate the secretion of adrenocorticotropic hormone (ACTH). Binds with high affinity to CRF receptor types 1, 2-alpha, and 2-beta. Plays a role in the establishment of normal hearing thresholds. Reduces food intake and regulates ghrelin levels in gastric body and plasma. The sequence is that of Urocortin (Ucn) from Rattus norvegicus (Rat).